A 384-amino-acid polypeptide reads, in one-letter code: Dual-specificity RNA methyltransferase RlmN (384 aa).

The active-site Proton acceptor is Glu-105. The Radical SAM core domain occupies 111 to 350 (EDDRATLCVS…TIVRKTRGDD (240 aa)). Residues Cys-118 and Cys-355 are joined by a disulfide bond. [4Fe-4S] cluster contacts are provided by Cys-125, Cys-129, and Cys-132. S-adenosyl-L-methionine-binding positions include 179–180 (GE), Ser-211, 233–235 (SLH), and Asn-312. Cys-355 serves as the catalytic S-methylcysteine intermediate.

The protein belongs to the radical SAM superfamily. RlmN family. [4Fe-4S] cluster is required as a cofactor.

It localises to the cytoplasm. It catalyses the reaction adenosine(2503) in 23S rRNA + 2 reduced [2Fe-2S]-[ferredoxin] + 2 S-adenosyl-L-methionine = 2-methyladenosine(2503) in 23S rRNA + 5'-deoxyadenosine + L-methionine + 2 oxidized [2Fe-2S]-[ferredoxin] + S-adenosyl-L-homocysteine. The enzyme catalyses adenosine(37) in tRNA + 2 reduced [2Fe-2S]-[ferredoxin] + 2 S-adenosyl-L-methionine = 2-methyladenosine(37) in tRNA + 5'-deoxyadenosine + L-methionine + 2 oxidized [2Fe-2S]-[ferredoxin] + S-adenosyl-L-homocysteine. Specifically methylates position 2 of adenine 2503 in 23S rRNA and position 2 of adenine 37 in tRNAs. m2A2503 modification seems to play a crucial role in the proofreading step occurring at the peptidyl transferase center and thus would serve to optimize ribosomal fidelity. The protein is Dual-specificity RNA methyltransferase RlmN of Escherichia coli O6:H1 (strain CFT073 / ATCC 700928 / UPEC).